A 973-amino-acid chain; its full sequence is Leucine--tRNA ligase, chloroplastic/mitochondrial (973 aa).

The short motif at Pro126 to His135 is the 'HIGH' region element. Positions Lys730–Ser734 match the 'KMSKS' region motif. Position 733 (Lys733) interacts with ATP.

It belongs to the class-I aminoacyl-tRNA synthetase family.

The protein localises to the plastid. The protein resides in the chloroplast. It is found in the mitochondrion. It carries out the reaction tRNA(Leu) + L-leucine + ATP = L-leucyl-tRNA(Leu) + AMP + diphosphate. Its function is as follows. Catalyzes the specific attachment of an amino acid to its cognate tRNA in a two step reaction: the amino acid (AA) is first activated by ATP to form AA-AMP and then transferred to the acceptor end of the tRNA. The sequence is that of Leucine--tRNA ligase, chloroplastic/mitochondrial from Arabidopsis thaliana (Mouse-ear cress).